The following is a 111-amino-acid chain: Macrodomain Ori protein (111 aa).

The protein belongs to the MaoP family.

In terms of biological role, involved in the organization of the Ori region of the chromosome into a macrodomain (MD). It constrains DNA mobility in the Ori macrodomain and limits long-distance DNA interactions with other chromosomal regions. The protein is Macrodomain Ori protein of Haemophilus influenzae (strain ATCC 51907 / DSM 11121 / KW20 / Rd).